Consider the following 352-residue polypeptide: Cuticle collagen dpy-17 (352 aa).

A signal peptide spans 1 to 29 (MSVFAGYAACTLGAVSMLLCVSLVPQVYQ). Residues 61–64 (RVRR) form a furin-like endopeptidase recognition region region. Disordered stretches follow at residues 73-143 (GGYG…GPGD) and 156-352 (GPAG…GYRN). Over residues 87-97 (GPHGGFPGGPQ) the composition is skewed to gly residues. 4 triple-helical region regions span residues 156-182 (GPAGPKGTPGHDGPDGIPGVPGVDGED), 202-264 (GPQG…DVEH), 267-290 (GLPGAKGTPGAPGESGDQGEQGDR), and 294-329 (GIAGPPGERGPQGEKGDDGPNGAAGSPGEEGEPGQD). Residues 202-259 (GPQGPPGSQGKPGARGMRGARGQAAMPGRDGSPGMPGSLGPIGPPGAAGEEGPTGEPG) form the Collagen-like domain. Over residues 207 to 259 (PGSQGKPGARGMRGARGQAAMPGRDGSPGMPGSLGPIGPPGAAGEEGPTGEPG) the composition is skewed to low complexity. Over residues 337 to 352 (QRNTNAAVSGNQGYRN) the composition is skewed to polar residues.

This sequence belongs to the cuticular collagen family. Collagen polypeptide chains are complexed within the cuticle by disulfide bonds and other types of covalent cross-links.

The protein localises to the secreted. The protein resides in the extracellular space. Secreted collagen that forms part of the nematode cuticle, which functions as an exoskeleton and a barrier to protect the worm from its environment. Secretion and subsequent incorporation into the cuticle is likely mediated by bli-4, which probably cleaves at the N-terminal consensus furin cleavage site. This chain is Cuticle collagen dpy-17, found in Caenorhabditis elegans.